Consider the following 495-residue polypeptide: AAA-ATPase At2g18193 (495 aa).

Residues 7 to 28 (FSFSPSSLFSAYASLTGFLMLF) traverse the membrane as a helical segment. 250–257 (GPPGTGKS) serves as a coordination point for ATP. Residues 451–495 (EVSICKATDDDEKQNGSLGCVKKKKKGGKQKGKGKGKGKAKTYLI) are disordered. Positions 471-495 (VKKKKKGGKQKGKGKGKGKAKTYLI) are enriched in basic residues.

This sequence belongs to the AAA ATPase family. BCS1 subfamily. Mg(2+) serves as cofactor.

Its subcellular location is the membrane. It carries out the reaction ATP + H2O = ADP + phosphate + H(+). This chain is AAA-ATPase At2g18193, found in Arabidopsis thaliana (Mouse-ear cress).